The following is a 509-amino-acid chain: ATP synthase subunit alpha (509 aa).

169-176 (GDRQTGKT) is a binding site for ATP.

This sequence belongs to the ATPase alpha/beta chains family. As to quaternary structure, F-type ATPases have 2 components, CF(1) - the catalytic core - and CF(0) - the membrane proton channel. CF(1) has five subunits: alpha(3), beta(3), gamma(1), delta(1), epsilon(1). CF(0) has three main subunits: a(1), b(2) and c(9-12). The alpha and beta chains form an alternating ring which encloses part of the gamma chain. CF(1) is attached to CF(0) by a central stalk formed by the gamma and epsilon chains, while a peripheral stalk is formed by the delta and b chains.

The protein resides in the cell inner membrane. It catalyses the reaction ATP + H2O + 4 H(+)(in) = ADP + phosphate + 5 H(+)(out). Functionally, produces ATP from ADP in the presence of a proton gradient across the membrane. The alpha chain is a regulatory subunit. The protein is ATP synthase subunit alpha of Rhizobium etli (strain ATCC 51251 / DSM 11541 / JCM 21823 / NBRC 15573 / CFN 42).